The sequence spans 429 residues: Small ribosomal subunit protein uS5m (429 aa).

Residues 108 to 127 form a disordered region; the sequence is AGAKKGRGKRTKKKKRKDLN. The span at 111–125 shows a compositional bias: basic residues; sequence KKGRGKRTKKKKRKD. Positions 218–282 constitute an S5 DRBM domain; sequence FDTRILEVRN…NRAVHHLYYI (65 aa).

This sequence belongs to the universal ribosomal protein uS5 family. As to quaternary structure, component of the mitochondrial ribosome small subunit (28S) which comprises a 12S rRNA and about 30 distinct proteins.

The protein resides in the mitochondrion. This chain is Small ribosomal subunit protein uS5m (MRPS5), found in Pongo abelii (Sumatran orangutan).